The sequence spans 219 residues: Ras-related protein Rab-3B (219 aa).

Residue alanine 2 is modified to N-acetylalanine. Residues serine 31, serine 32, valine 33, glycine 34, lysine 35, threonine 36, serine 37, proline 49, and serine 53 each coordinate GTP. Threonine 36 contributes to the Mg(2+) binding site. Positions 45–58 (DTFTPAFVSTVGID) match the Switch 1 motif. Positions 54 and 77 each coordinate Mg(2+). Residues 78 to 96 (TAGQERYRTITTAYYRGAM) carry the Switch 2 motif. GTP is bound at residue glycine 80. Threonine 86 is subject to Phosphothreonine; by LRRK2. 5 residues coordinate GTP: asparagine 135, lysine 136, aspartate 138, alanine 166, and lysine 167. 2 positions are modified to phosphoserine: serine 188 and serine 190. Residues cysteine 217 and cysteine 219 are each lipidated (S-geranylgeranyl cysteine). At cysteine 219 the chain carries Cysteine methyl ester.

The protein belongs to the small GTPase superfamily. Rab family. Interacts with RIMS1, RIMS2, RPH3A and RPH3AL. The GTP-bound form interacts with GAS8/DRC4 (via coiled-coil domains). Interacts with GDI2, CHM and CHML; phosphorylation at Thr-86 disrupts these interactions. Interacts with MADD (via uDENN domain); the GTP-bound form is preferred for interaction. Mg(2+) serves as cofactor. Phosphorylation of Thr-86 in the switch II region by LRRK2 prevents the association of RAB regulatory proteins, including CHM, CHML and RAB GDP dissociation inhibitor GDI2. As to expression, abundantly expressed in testis, lung and brain.

Its subcellular location is the cell membrane. It is found in the golgi apparatus. The catalysed reaction is GTP + H2O = GDP + phosphate + H(+). Its activity is regulated as follows. Regulated by guanine nucleotide exchange factors (GEFs) which promote the exchange of bound GDP for free GTP. Regulated by GTPase activating proteins (GAPs) which increase the GTP hydrolysis activity. Inhibited by GDP dissociation inhibitors (GDIs) which prevent Rab-GDP dissociation. In terms of biological role, the small GTPases Rab are key regulators of intracellular membrane trafficking, from the formation of transport vesicles to their fusion with membranes. Rabs cycle between an inactive GDP-bound form and an active GTP-bound form that is able to recruit to membranes different sets of downstream effectors directly responsible for vesicle formation, movement, tethering and fusion. The chain is Ras-related protein Rab-3B from Mus musculus (Mouse).